Here is a 169-residue protein sequence, read N- to C-terminus: Nucleoside diphosphate kinase 3-A (169 aa).

Lys-29, Arg-105, Thr-111, Arg-122, Val-129, and Asn-132 together coordinate ADP. The active-site Pros-phosphohistidine intermediate is His-135.

It belongs to the NDK family. Homohexamer. Requires Mg(2+) as cofactor.

It is found in the mitochondrion outer membrane. It localises to the cytoplasm. The protein resides in the cytoskeleton. Its subcellular location is the cilium basal body. It catalyses the reaction a 2'-deoxyribonucleoside 5'-diphosphate + ATP = a 2'-deoxyribonucleoside 5'-triphosphate + ADP. The enzyme catalyses a ribonucleoside 5'-diphosphate + ATP = a ribonucleoside 5'-triphosphate + ADP. Its function is as follows. Catalyzes the phosphorylation of ribonucleosides and deoxyribonucleoside diphosphates, other than ATP, into the corresponding triphosphates with ATP as the major phosphate donor. The ATP gamma phosphate is transferred to the nucleoside diphosphate beta phosphate via a ping-pong mechanism, using a phosphorylated active-site intermediate. Through the catalyzed exchange of gamma-phosphate between di- and triphosphonucleosides participates in regulation of intracellular nucleotide homeostasis. Required for ciliary function during renal development. Independently of its kinase activity, facilitates mitochondrial tethering prior to membrane fusion through its direct membrane-binding and hexamerization. Implicated in repair of both single- and double-stranded breaks in DNA, independently of its kinase activity. The chain is Nucleoside diphosphate kinase 3-A from Xenopus laevis (African clawed frog).